The sequence spans 457 residues: Siroheme synthase (457 aa).

The tract at residues 1–204 (MDHLPIFCQL…ADEKAVNATT (204 aa)) is precorrin-2 dehydrogenase /sirohydrochlorin ferrochelatase. NAD(+)-binding positions include 22 to 23 (DV) and 43 to 44 (LT). A Phosphoserine modification is found at serine 128. Residues 216–457 (GEVVLVGAGP…RDKLNWFSNY (242 aa)) form a uroporphyrinogen-III C-methyltransferase region. Proline 225 serves as a coordination point for S-adenosyl-L-methionine. Aspartate 248 functions as the Proton acceptor in the catalytic mechanism. Lysine 270 (proton donor) is an active-site residue. S-adenosyl-L-methionine contacts are provided by residues 301–303 (GGD), isoleucine 306, 331–332 (TA), methionine 382, and glycine 411.

The protein in the N-terminal section; belongs to the precorrin-2 dehydrogenase / sirohydrochlorin ferrochelatase family. In the C-terminal section; belongs to the precorrin methyltransferase family.

The catalysed reaction is uroporphyrinogen III + 2 S-adenosyl-L-methionine = precorrin-2 + 2 S-adenosyl-L-homocysteine + H(+). The enzyme catalyses precorrin-2 + NAD(+) = sirohydrochlorin + NADH + 2 H(+). It carries out the reaction siroheme + 2 H(+) = sirohydrochlorin + Fe(2+). Its pathway is cofactor biosynthesis; adenosylcobalamin biosynthesis; precorrin-2 from uroporphyrinogen III: step 1/1. It functions in the pathway cofactor biosynthesis; adenosylcobalamin biosynthesis; sirohydrochlorin from precorrin-2: step 1/1. The protein operates within porphyrin-containing compound metabolism; siroheme biosynthesis; precorrin-2 from uroporphyrinogen III: step 1/1. It participates in porphyrin-containing compound metabolism; siroheme biosynthesis; siroheme from sirohydrochlorin: step 1/1. Its pathway is porphyrin-containing compound metabolism; siroheme biosynthesis; sirohydrochlorin from precorrin-2: step 1/1. In terms of biological role, multifunctional enzyme that catalyzes the SAM-dependent methylations of uroporphyrinogen III at position C-2 and C-7 to form precorrin-2 via precorrin-1. Then it catalyzes the NAD-dependent ring dehydrogenation of precorrin-2 to yield sirohydrochlorin. Finally, it catalyzes the ferrochelation of sirohydrochlorin to yield siroheme. In Salmonella dublin (strain CT_02021853), this protein is Siroheme synthase.